We begin with the raw amino-acid sequence, 276 residues long: Radial spoke head protein 9 homolog (276 aa).

Belongs to the flagellar radial spoke RSP9 family. In terms of assembly, component of the axonemal radial spoke 1 (RS1) and 2 (RS2) complexes, at least composed of spoke head proteins RSPH1, RSPH3, RSPH9 and the cilia-specific component RSPH4A or sperm-specific component RSPH6A, spoke stalk proteins RSPH14, DNAJB13, DYDC1, ROPN1L and NME5, and the RS1 complex-specific anchor protein IQUB. Interacts with IQUB. Interacts with RSPH3B. Interacts with RSPH4A. Interacts with RSPH6A. Interacts with CFAP61. Interacts with LRRC23. In terms of tissue distribution, expressed in the testis, trachea, lung, oviduct and ependymal cells (at protein level).

The protein localises to the cytoplasm. The protein resides in the cytoskeleton. Its subcellular location is the cilium axoneme. It is found in the flagellum axoneme. It localises to the cell projection. The protein localises to the kinocilium. In terms of biological role, functions as part of axonemal radial spoke complexes that play an important part in the motility of sperm and cilia. Essential for both the radial spoke head assembly and the central pair microtubule stability in ependymal motile cilia. Required for motility of olfactory and neural cilia and for the structural integrity of ciliary axonemes in both 9+0 and 9+2 motile cilia. The protein is Radial spoke head protein 9 homolog (Rsph9) of Mus musculus (Mouse).